Reading from the N-terminus, the 511-residue chain is MSLRISKDVSVSVNTADLLPEDDGFDRVDGDNRGWFSVFLGLFNTHPSDWNIALNEAIETIDWDSKSITLAQPLGNFFTFAFYVVRLLQLSLIKPNLSRINEKTDHFDLSKSEMLKKYEYLYHFTNDKNQSVGNVYYRFLGRLGKFFDICIVLLTFTNGFITYKFFWGNFKMYCLFYLKKGPHLRNVTKASLQKLGQDDDDGSLWSSLRYFWNGTKDKEGSTDDRDDDDGDIHYKLFKWTPSQFITMLFVSFAPTAVVFLLFTEVSFLTLIAVIVHQWVLHRLVIDCYGNRLVHESVIASANLAEVEAKFVKPRMSKKVQDVAIDCTPHGDGMVKFYPALTTNRSHIFQTHSLTGELITETFNPSTKEFEDLQTEGTTHNVIRTAPYAAGDLLHRDPYWYQRNMIMRDVAHRPYFHSREVSPTRYHPSRISPRPGQYSPLVSSTSGMSTPLMRPDRSPFLNTRPSLGEREELFHRGNSRSPLRQPIENFKSLDRSSDSQSPIRRHNGDSDA.

Helical transmembrane passes span 146–166 (FFDI…YKFF) and 255–275 (TAVV…AVIV). The interval 420 to 511 (VSPTRYHPSR…IRRHNGDSDA (92 aa)) is disordered. Over residues 439 to 448 (PLVSSTSGMS) the composition is skewed to polar residues.

It belongs to the NUR1 family.

Its subcellular location is the nucleus membrane. Functionally, member of a perinuclear network that controls recombination at multiple loci to maintain genome stability. Required for rDNA repeat stability. This chain is Nuclear rim protein 1 (NUR1), found in Zygosaccharomyces rouxii (strain ATCC 2623 / CBS 732 / NBRC 1130 / NCYC 568 / NRRL Y-229).